The sequence spans 548 residues: Chaperonin GroEL (548 aa).

ATP-binding positions include 30 to 33 (TLGP), K51, 87 to 91 (DGTTT), G415, 479 to 481 (NAA), and D495.

The protein belongs to the chaperonin (HSP60) family. In terms of assembly, forms a cylinder of 14 subunits composed of two heptameric rings stacked back-to-back. Interacts with the co-chaperonin GroES.

It localises to the cytoplasm. It catalyses the reaction ATP + H2O + a folded polypeptide = ADP + phosphate + an unfolded polypeptide.. Together with its co-chaperonin GroES, plays an essential role in assisting protein folding. The GroEL-GroES system forms a nano-cage that allows encapsulation of the non-native substrate proteins and provides a physical environment optimized to promote and accelerate protein folding. This Klebsiella pneumoniae (strain 342) protein is Chaperonin GroEL.